The primary structure comprises 582 residues: uncharacterized protein (582 aa).

The next 12 helical transmembrane spans lie at 29 to 49, 117 to 137, 155 to 175, 225 to 245, 254 to 274, 287 to 307, 329 to 349, 376 to 396, 432 to 452, 458 to 478, 491 to 511, and 523 to 543; these read LFIVLLRFIIPSILVSFFAAL, ISAPITVIINALTLLITMGLA, VWATGFITNVIVSIATSMIIV, YVYILAGLFTIQTFNQMYFLL, FISIIPPLANLINILFDYLLI, ATVIGWSLSCLAYVIYNIVLI, YLYLIILIGLASFFRNAALSV, SIFGSVTPISNLMLQSVWGLI, IVYLLFGFGLNNIFLINLFNI, LVVSNLVLRITLVQSIFIALS, IGMAWIASLMQGLFTFAPVFF, and IYLYIWIQPINAILTCIGNWI.

Its subcellular location is the cell membrane. This is an uncharacterized protein from Mycoplasmoides gallisepticum (strain R(low / passage 15 / clone 2)) (Mycoplasma gallisepticum).